Consider the following 556-residue polypeptide: Dihydroxy-acid dehydratase (556 aa).

Cys-47 contributes to the [2Fe-2S] cluster binding site. Position 79 (Asp-79) interacts with Mg(2+). Cys-120 lines the [2Fe-2S] cluster pocket. 2 residues coordinate Mg(2+): Asp-121 and Lys-122. Lys-122 carries the N6-carboxylysine modification. Cys-192 serves as a coordination point for [2Fe-2S] cluster. Glu-444 is a Mg(2+) binding site. Residue Ser-470 is the Proton acceptor of the active site.

Belongs to the IlvD/Edd family. In terms of assembly, homodimer. Requires [2Fe-2S] cluster as cofactor. Mg(2+) is required as a cofactor.

It catalyses the reaction (2R)-2,3-dihydroxy-3-methylbutanoate = 3-methyl-2-oxobutanoate + H2O. It carries out the reaction (2R,3R)-2,3-dihydroxy-3-methylpentanoate = (S)-3-methyl-2-oxopentanoate + H2O. It functions in the pathway amino-acid biosynthesis; L-isoleucine biosynthesis; L-isoleucine from 2-oxobutanoate: step 3/4. It participates in amino-acid biosynthesis; L-valine biosynthesis; L-valine from pyruvate: step 3/4. Functionally, functions in the biosynthesis of branched-chain amino acids. Catalyzes the dehydration of (2R,3R)-2,3-dihydroxy-3-methylpentanoate (2,3-dihydroxy-3-methylvalerate) into 2-oxo-3-methylpentanoate (2-oxo-3-methylvalerate) and of (2R)-2,3-dihydroxy-3-methylbutanoate (2,3-dihydroxyisovalerate) into 2-oxo-3-methylbutanoate (2-oxoisovalerate), the penultimate precursor to L-isoleucine and L-valine, respectively. The protein is Dihydroxy-acid dehydratase of Prochlorococcus marinus (strain MIT 9313).